Reading from the N-terminus, the 144-residue chain is MEQALKQAGIAFDKNEVPVGAVIVDRLNQKIIVSSHNNTEEKNNALYHAEIIAINEACNLISSKNLNDYDIYVTLEPCAMCAAAIAHSRLKRLFYGASDSKHGAVESNLRYFNSSVCFYRPEIYSGILAEDSRLLMKEFFKRIR.

The 116-residue stretch at 1–116 (MEQALKQAGI…SNLRYFNSSV (116 aa)) folds into the CMP/dCMP-type deaminase domain. Zn(2+) is bound at residue histidine 48. Glutamate 50 functions as the Proton donor in the catalytic mechanism. Residues cysteine 78 and cysteine 81 each contribute to the Zn(2+) site.

The protein belongs to the cytidine and deoxycytidylate deaminase family. In terms of assembly, homodimer. The cofactor is Zn(2+).

It carries out the reaction adenosine(34) in tRNA + H2O + H(+) = inosine(34) in tRNA + NH4(+). Its function is as follows. Catalyzes the deamination of adenosine to inosine at the wobble position 34 of tRNA(Arg2). The sequence is that of tRNA-specific adenosine deaminase from Rickettsia felis (strain ATCC VR-1525 / URRWXCal2) (Rickettsia azadi).